Consider the following 88-residue polypeptide: YcgL domain-containing protein NTHI1684 (88 aa).

A YcgL domain is found at 1-85 (MLCAIYKSKK…QDDGLFNSLS (85 aa)).

The protein is YcgL domain-containing protein NTHI1684 of Haemophilus influenzae (strain 86-028NP).